The following is a 400-amino-acid chain: tRNA-specific adenosine deaminase 1 (400 aa).

The A to I editase domain occupies 76–400; the sequence is SIATGVKALP…WIPTRTDDVK (325 aa). Zn(2+) is bound at residue histidine 101. The active-site Proton donor is the glutamate 103. Arginine 108 provides a ligand contact to 1D-myo-inositol hexakisphosphate. Positions 157 and 223 each coordinate Zn(2+). Positions 226, 232, 369, and 375 each coordinate 1D-myo-inositol hexakisphosphate.

The protein belongs to the ADAT1 family. Requires 1D-myo-inositol hexakisphosphate as cofactor. Zn(2+) is required as a cofactor.

It catalyses the reaction adenosine(37) in tRNA(Ala) + H2O + H(+) = inosine(37) in tRNA(Ala) + NH4(+). In terms of biological role, deaminates adenosine-37 to inosine in tRNA-Ala. In Saccharomyces cerevisiae (strain ATCC 204508 / S288c) (Baker's yeast), this protein is tRNA-specific adenosine deaminase 1 (TAD1).